The sequence spans 425 residues: Kynureninase (425 aa).

Pyridoxal 5'-phosphate-binding positions include Leu-105, Thr-106, 133-136, Asp-218, His-221, and Tyr-243; that span reads FPSD. Residue Lys-244 is modified to N6-(pyridoxal phosphate)lysine. Positions 274 and 302 each coordinate pyridoxal 5'-phosphate.

The protein belongs to the kynureninase family. In terms of assembly, homodimer. Requires pyridoxal 5'-phosphate as cofactor.

It catalyses the reaction L-kynurenine + H2O = anthranilate + L-alanine + H(+). The enzyme catalyses 3-hydroxy-L-kynurenine + H2O = 3-hydroxyanthranilate + L-alanine + H(+). Its pathway is amino-acid degradation; L-kynurenine degradation; L-alanine and anthranilate from L-kynurenine: step 1/1. It functions in the pathway cofactor biosynthesis; NAD(+) biosynthesis; quinolinate from L-kynurenine: step 2/3. Functionally, catalyzes the cleavage of L-kynurenine (L-Kyn) and L-3-hydroxykynurenine (L-3OHKyn) into anthranilic acid (AA) and 3-hydroxyanthranilic acid (3-OHAA), respectively. The polypeptide is Kynureninase (Flavobacterium psychrophilum (strain ATCC 49511 / DSM 21280 / CIP 103535 / JIP02/86)).